Consider the following 452-residue polypeptide: Translation initiation factor eIF2B subunit gamma (452 aa).

M1 bears the N-acetylmethionine mark. The residue at position 261 (S261) is a Phosphoserine.

It belongs to the eIF-2B gamma/epsilon subunits family. As to quaternary structure, component of the translation initiation factor 2B (eIF2B) complex which is a heterodecamer of two sets of five different subunits: alpha, beta, gamma, delta and epsilon. Subunits alpha, beta and delta comprise a regulatory subcomplex and subunits epsilon and gamma comprise a catalytic subcomplex. Within the complex, the hexameric regulatory complex resides at the center, with the two heterodimeric catalytic subcomplexes bound on opposite sides.

It is found in the cytoplasm. Its subcellular location is the cytosol. Its activity is regulated as follows. Activated by the chemical integrated stress response (ISR) inhibitor ISRIB which stimulates guanine nucleotide exchange factor activity for both phosphorylated and unphosphorylated eIF2. In terms of biological role, acts as a component of the translation initiation factor 2B (eIF2B) complex, which catalyzes the exchange of GDP for GTP on the eukaryotic initiation factor 2 (eIF2) complex gamma subunit. Its guanine nucleotide exchange factor activity is repressed when bound to eIF2 complex phosphorylated on the alpha subunit, thereby limiting the amount of methionyl-initiator methionine tRNA available to the ribosome and consequently global translation is repressed. This chain is Translation initiation factor eIF2B subunit gamma (EIF2B3), found in Bos taurus (Bovine).